The chain runs to 93 residues: MTKIGFYLATYATIYIILSPGLLATAARENLHHQCFCESPSKCDCFPTTPTPPTSVNKSRKGGPLCTTDGDCKHFCRPKKGVCNIDFETCICQ.

Positions 1 to 24 (MTKIGFYLATYATIYIILSPGLLA) are cleaved as a signal peptide. 3 disulfides stabilise this stretch: Cys-43–Cys-83, Cys-66–Cys-90, and Cys-72–Cys-92.

Belongs to the DEFL family.

Its subcellular location is the secreted. The polypeptide is Putative defensin-like protein 283 (Arabidopsis thaliana (Mouse-ear cress)).